Consider the following 486-residue polypeptide: Transmembrane protein 39A (486 aa).

Asparagine 31 carries N-linked (GlcNAc...) asparagine glycosylation. Helical transmembrane passes span 72-92 (SLFF…IQYI), 110-130 (TSLN…VMLA), 155-175 (LILA…WTLV), 182-202 (SVLN…LYCF), 285-305 (EVLF…LCFV), 317-337 (CEHL…QLLP), 418-438 (VLNL…YSLL), and 444-464 (NHTL…FKLL).

This sequence belongs to the TMEM39 family. In terms of assembly, interacts with SACM1L, SEC23A and SEC24A.

The protein resides in the endoplasmic reticulum membrane. Functionally, regulates autophagy by controlling the spatial distribution and levels of the intracellular phosphatidylinositol 4-phosphate (PtdIns(4)P) pools. Modulates (PtdIns(4)P) levels by regulating the ER-to-Golgi trafficking of the phosphatidylinositide phosphatase SACM1L. This is Transmembrane protein 39A (Tmem39a) from Mus musculus (Mouse).